Consider the following 321-residue polypeptide: PI-PLC X domain-containing protein 3 (321 aa).

The 176-residue stretch at 22–197 (SIHSIPLTNL…DYQVLVFYHS (176 aa)) folds into the PI-PLC X-box domain. Active-site residues include His37 and His114.

The chain is PI-PLC X domain-containing protein 3 (PLCXD3) from Bos taurus (Bovine).